The primary structure comprises 286 residues: Bifunctional protein FolD (286 aa).

NADP(+) contacts are provided by residues Gly166 to Ser168 and Ile232.

The protein belongs to the tetrahydrofolate dehydrogenase/cyclohydrolase family. As to quaternary structure, homodimer.

It catalyses the reaction (6R)-5,10-methylene-5,6,7,8-tetrahydrofolate + NADP(+) = (6R)-5,10-methenyltetrahydrofolate + NADPH. The catalysed reaction is (6R)-5,10-methenyltetrahydrofolate + H2O = (6R)-10-formyltetrahydrofolate + H(+). It functions in the pathway one-carbon metabolism; tetrahydrofolate interconversion. Its function is as follows. Catalyzes the oxidation of 5,10-methylenetetrahydrofolate to 5,10-methenyltetrahydrofolate and then the hydrolysis of 5,10-methenyltetrahydrofolate to 10-formyltetrahydrofolate. The sequence is that of Bifunctional protein FolD from Vibrio cholerae serotype O1 (strain ATCC 39541 / Classical Ogawa 395 / O395).